A 220-amino-acid chain; its full sequence is Protein GrpE (220 aa).

The protein belongs to the GrpE family. Homodimer.

It localises to the cytoplasm. In terms of biological role, participates actively in the response to hyperosmotic and heat shock by preventing the aggregation of stress-denatured proteins, in association with DnaK and GrpE. It is the nucleotide exchange factor for DnaK and may function as a thermosensor. Unfolded proteins bind initially to DnaJ; upon interaction with the DnaJ-bound protein, DnaK hydrolyzes its bound ATP, resulting in the formation of a stable complex. GrpE releases ADP from DnaK; ATP binding to DnaK triggers the release of the substrate protein, thus completing the reaction cycle. Several rounds of ATP-dependent interactions between DnaJ, DnaK and GrpE are required for fully efficient folding. The polypeptide is Protein GrpE (Bartonella quintana (strain Toulouse) (Rochalimaea quintana)).